Consider the following 442-residue polypeptide: tRNA(Ile)-lysidine synthase (442 aa).

An ATP-binding site is contributed by 30–35; sequence SGGLDS.

This sequence belongs to the tRNA(Ile)-lysidine synthase family.

Its subcellular location is the cytoplasm. The catalysed reaction is cytidine(34) in tRNA(Ile2) + L-lysine + ATP = lysidine(34) in tRNA(Ile2) + AMP + diphosphate + H(+). Ligates lysine onto the cytidine present at position 34 of the AUA codon-specific tRNA(Ile) that contains the anticodon CAU, in an ATP-dependent manner. Cytidine is converted to lysidine, thus changing the amino acid specificity of the tRNA from methionine to isoleucine. The chain is tRNA(Ile)-lysidine synthase from Pseudomonas fluorescens (strain Pf0-1).